The chain runs to 153 residues: Deoxyuridine 5'-triphosphate nucleotidohydrolase (153 aa).

DUMP contacts are provided by S75, G88, D91, Y94, K99, R143, F148, and G149.

It belongs to the dUTPase family. Homotrimer. Mg(2+) is required as a cofactor.

The catalysed reaction is dUTP + H2O = dUMP + diphosphate + H(+). It functions in the pathway pyrimidine metabolism; dUMP biosynthesis; dUMP from dCTP (dUTP route): step 2/2. In terms of biological role, involved in nucleotide metabolism via production of dUMP, the immediate precursor of thymidine nucleotides, and decreases the intracellular concentration of dUTP so that uracil cannot be incorporated into DNA. This is Deoxyuridine 5'-triphosphate nucleotidohydrolase (DUT1) from Eremothecium gossypii (strain ATCC 10895 / CBS 109.51 / FGSC 9923 / NRRL Y-1056) (Yeast).